The chain runs to 1744 residues: Complement C4-A (1744 aa).

Residues 1 to 19 (MRLLWGLIWASSFFTLSLQ) form the signal peptide. Cys-68 and Cys-97 form a disulfide bridge. N-linked (GlcNAc...) asparagine glycosylation occurs at Asn-226. Cys-635 and Cys-669 are joined by a disulfide. A propeptide spanning residues 676–679 (RKKR) is cleaved from the precursor. 3 disulfides stabilise this stretch: Cys-702/Cys-728, Cys-703/Cys-735, and Cys-716/Cys-736. The 35-residue stretch at 702–736 (CCQDGVTRLPMMRSCEQRAARVQQPDCREPFLSCC) folds into the Anaphylatoxin-like domain. N-linked (GlcNAc...) asparagine glycosylation is present at Asn-862. Ser-918 carries the phosphoserine; by FAM20C modification. The isoglutamyl cysteine thioester (Cys-Gln) cross-link spans 1010–1013 (CGEQ). Residue Thr-1244 is glycosylated (O-linked (GalNAc...) threonine). Residue Asn-1328 is glycosylated (N-linked (GlcNAc...) (complex) asparagine). The N-linked (GlcNAc...) asparagine glycan is linked to Asn-1391. Sulfotyrosine is present on residues Tyr-1417, Tyr-1420, and Tyr-1422. The propeptide occupies 1447–1453 (RRNRRRR). Intrachain disulfides connect Cys-1471-Cys-1535, Cys-1583-Cys-1588, Cys-1595-Cys-1673, Cys-1618-Cys-1742, and Cys-1718-Cys-1727. The region spanning 1595 to 1742 (CPRQRRALER…FLQEYGTQGC (148 aa)) is the NTR domain.

In terms of assembly, complement circulates in blood as a disulfide-linked trimer of an alpha, beta and gamma chain. Complement C4b is composed of complement C4b-A, complement C4 beta and complement C4 gamma chains that are associated via disulfide bonds. Non-enzymatic component of the C3 convertase, also named C4bC2b, composed of the serine protease complement C2b (C2), as well as complement C4b. Non-enzymatic component of the C5 convertase, also named C4bC2bC3b, composed of the serine protease complement C2b (C2), complement C3b, as well as complement C4b. Prior to secretion, the single-chain precursor is enzymatically cleaved by plasminogen (PLG) to yield non-identical chains alpha, beta and gamma. During activation of the complement systems, the alpha chain is cleaved into C4a and C4b by different proteases depending on the complement pathway: C4b stays linked to the beta and gamma chains, while C4a is released in the plasma. The alpha chain is cleaved by C1S to generate C4a and C4b following activation by the classical complement system. The alpha chain is cleaved to generate C4a and C4b by MASP2 following activation by the lectin complement system. The alpha chain is cleaved by GZMK to generate C4a and C4b following activation by the GZMK complement system. Further degradation of C4b by C1 into the inactive fragments C4c and C4d blocks the generation of C3 convertase. The proteolytic cleavages often are incomplete so that many structural forms can be found in plasma. Post-translationally, upon activation, the internal thioester bond reacts with carbohydrate antigens on the target surface to form amide or ester bonds, leading to covalent association with the surface of pathogens. In terms of processing, ser-1236 of complement C4b interacts with complement C3b via a thioester linkage. N- and O-glycosylated. O-glycosylated with a core 1 or possibly core 8 glycan. Complement component C4 is expressed at highest levels in the liver, at moderate levels in the adrenal cortex, adrenal medulla, thyroid gland, and the kidney, and at lowest levels in the heart, ovary, small intestine, thymus, pancreas and spleen. The extra-hepatic sites of expression may be important for the local protection and inflammatory response.

The protein localises to the secreted. It localises to the synapse. Its subcellular location is the cell projection. The protein resides in the axon. It is found in the dendrite. The protein localises to the cell surface. With respect to regulation, specifically inhibited by nanobody hC4Nb8, inhibiting the classical complement pathway. Specifically inhibited by NbB5, NbE11 and NbH9 nanobodies, and to a lesser extent by NbH11 and NbE3 nanobodies. Functionally, precursor of non-enzymatic components of the classical, lectin and GZMK complement pathways, which consist in a cascade of proteins that leads to phagocytosis and breakdown of pathogens and signaling that strengthens the adaptive immune system. Non-enzymatic component of C3 and C5 convertases. Generated following cleavage by complement proteases (C1S, MASP2 or GZMK, depending on the complement pathway), it covalently attaches to the surface of pathogens, where it acts as an opsonin that marks the surface of antigens for removal. It then recruits the serine protease complement C2b to form the C3 and C5 convertases, which cleave and activate C3 and C5, respectively, the next components of the complement pathways. Complement C4b-A isotype is responsible for effective binding to form amide bonds with immune aggregates or protein antigens, while complement C4b-B isotype catalyzes the transacylation of the thioester carbonyl group to form ester bonds with carbohydrate antigens. In terms of biological role, putative humoral mediator released following cleavage by complement proteases (C1S, MASP2 or GZMK, depending on the complement pathway). While it is strongly similar to anaphylatoxins, its role is unclear. Was reported to act as a mediator of local inflammatory process; however these effects were probably due to contamination with C3a and/C5a anaphylatoxins in biological assays. The protein is Complement C4-A of Homo sapiens (Human).